Here is a 365-residue protein sequence, read N- to C-terminus: GTPase Obg (365 aa).

The Obg domain maps to 2–160; that stretch reads ESFVDEVAIE…KFLRLSLKLL (159 aa). Positions 161–329 constitute an OBG-type G domain; the sequence is ADVGIVGLPN…LLEAMDEAFF (169 aa). GTP-binding positions include 167-174, 192-196, 215-218, 282-285, and 310-312; these read GLPNAGKS, FTTLS, DIPG, NKID, and SAD. The Mg(2+) site is built by S174 and T194.

Belongs to the TRAFAC class OBG-HflX-like GTPase superfamily. OBG GTPase family. Monomer. The cofactor is Mg(2+).

It localises to the cytoplasm. An essential GTPase which binds GTP, GDP and possibly (p)ppGpp with moderate affinity, with high nucleotide exchange rates and a fairly low GTP hydrolysis rate. Plays a role in control of the cell cycle, stress response, ribosome biogenesis and in those bacteria that undergo differentiation, in morphogenesis control. The polypeptide is GTPase Obg (Leptospira borgpetersenii serovar Hardjo-bovis (strain JB197)).